Consider the following 67-residue polypeptide: UPF0337 protein BCE_3655 (67 aa).

It belongs to the UPF0337 (CsbD) family.

The polypeptide is UPF0337 protein BCE_3655 (Bacillus cereus (strain ATCC 10987 / NRS 248)).